The primary structure comprises 282 residues: Bifunctional protein FolD (282 aa).

NADP(+) is bound by residues 165 to 167 (GRS), S190, and T231.

The protein belongs to the tetrahydrofolate dehydrogenase/cyclohydrolase family. In terms of assembly, homodimer.

The enzyme catalyses (6R)-5,10-methylene-5,6,7,8-tetrahydrofolate + NADP(+) = (6R)-5,10-methenyltetrahydrofolate + NADPH. It catalyses the reaction (6R)-5,10-methenyltetrahydrofolate + H2O = (6R)-10-formyltetrahydrofolate + H(+). It functions in the pathway one-carbon metabolism; tetrahydrofolate interconversion. Catalyzes the oxidation of 5,10-methylenetetrahydrofolate to 5,10-methenyltetrahydrofolate and then the hydrolysis of 5,10-methenyltetrahydrofolate to 10-formyltetrahydrofolate. This Clostridium botulinum (strain Alaska E43 / Type E3) protein is Bifunctional protein FolD.